The sequence spans 356 residues: Torsin-like protein (356 aa).

A signal peptide spans 1-18; the sequence is MKLDYVLLLLFHLCFVNT. 110 to 117 serves as a coordination point for ATP; it reads GYTGSGKN. N-linked (GlcNAc...) asparagine glycosylation is found at N125 and N250.

The protein belongs to the ClpA/ClpB family. Torsin subfamily.

The protein localises to the endoplasmic reticulum lumen. In terms of biological role, may serve as a molecular chaperone assisting in the proper folding of secreted and/or membrane proteins. The sequence is that of Torsin-like protein (ooc-5) from Caenorhabditis elegans.